The chain runs to 142 residues: Peptidyl-prolyl cis-trans isomerase FKBP2 (142 aa).

The first 21 residues, 1 to 21 (MRLSWFRVLTVLSICLSAVAT), serve as a signal peptide directing secretion. In terms of domain architecture, PPIase FKBP-type spans 49-137 (GDVLHMHYTG…VFEVELLKIE (89 aa)). Positions 139–142 (RTEL) match the Prevents secretion from ER motif.

This sequence belongs to the FKBP-type PPIase family. FKBP2 subfamily. Interacts with ARFGEF1/BIG1 and the C-terminal of EPB41L2. T-cells and thymus.

The protein localises to the endoplasmic reticulum membrane. The enzyme catalyses [protein]-peptidylproline (omega=180) = [protein]-peptidylproline (omega=0). Inhibited by both FK506 and rapamycin. PPIases accelerate the folding of proteins. It catalyzes the cis-trans isomerization of proline imidic peptide bonds in oligopeptides. This chain is Peptidyl-prolyl cis-trans isomerase FKBP2 (FKBP2), found in Homo sapiens (Human).